A 230-amino-acid chain; its full sequence is Ribose-5-phosphate isomerase A (230 aa).

Residues 31-34, 87-90, and 100-103 each bind substrate; these read TGST, DGAD, and KGGG. The active-site Proton acceptor is glutamate 109. Lysine 127 is a substrate binding site.

It belongs to the ribose 5-phosphate isomerase family. Homodimer.

It carries out the reaction aldehydo-D-ribose 5-phosphate = D-ribulose 5-phosphate. It participates in carbohydrate degradation; pentose phosphate pathway; D-ribose 5-phosphate from D-ribulose 5-phosphate (non-oxidative stage): step 1/1. Functionally, catalyzes the reversible conversion of ribose-5-phosphate to ribulose 5-phosphate. The sequence is that of Ribose-5-phosphate isomerase A from Lactobacillus delbrueckii subsp. bulgaricus (strain ATCC 11842 / DSM 20081 / BCRC 10696 / JCM 1002 / NBRC 13953 / NCIMB 11778 / NCTC 12712 / WDCM 00102 / Lb 14).